A 106-amino-acid chain; its full sequence is Large ribosomal subunit protein bL21 (106 aa).

This sequence belongs to the bacterial ribosomal protein bL21 family. As to quaternary structure, part of the 50S ribosomal subunit. Contacts protein L20.

In terms of biological role, this protein binds to 23S rRNA in the presence of protein L20. The sequence is that of Large ribosomal subunit protein bL21 from Chlamydia felis (strain Fe/C-56) (Chlamydophila felis).